Here is a 439-residue protein sequence, read N- to C-terminus: Serine hydroxymethyltransferase (439 aa).

126–128 (AHV) provides a ligand contact to (6S)-5,6,7,8-tetrahydrofolate. Residue K232 is modified to N6-(pyridoxal phosphate)lysine.

It belongs to the SHMT family. Homodimer. The cofactor is pyridoxal 5'-phosphate.

The protein resides in the cytoplasm. Its pathway is amino-acid biosynthesis; glycine biosynthesis; glycine from L-serine: step 1/1. Functionally, catalyzes the reversible interconversion of serine and glycine with a modified folate serving as the one-carbon carrier. Also exhibits a pteridine-independent aldolase activity toward beta-hydroxyamino acids, producing glycine and aldehydes, via a retro-aldol mechanism. This is Serine hydroxymethyltransferase from Staphylothermus marinus (strain ATCC 43588 / DSM 3639 / JCM 9404 / F1).